The following is a 142-amino-acid chain: Interleukin-3 (142 aa).

The signal sequence occupies residues 1–18; that stretch reads MSHLPILLLLLLVSPGLQ. N33, N88, and N108 each carry an N-linked (GlcNAc...) asparagine glycan. The cysteines at positions 34 and 102 are disulfide-linked.

It belongs to the IL-3 family. In terms of assembly, monomer. As to expression, activated T-cells, mast cells, natural killer cells.

Its subcellular location is the secreted. Granulocyte/macrophage colony-stimulating factors are cytokines that act in hematopoiesis by controlling the production, differentiation, and function of 2 related white cell populations of the blood, the granulocytes and the monocytes-macrophages. Functionally, this CSF induces granulocytes, macrophages, mast cells, stem cells, erythroid cells, eosinophils and megakaryocytes. This Saguinus oedipus (Cotton-top tamarin) protein is Interleukin-3 (IL3).